A 185-amino-acid polypeptide reads, in one-letter code: Large ribosomal subunit protein uL22 (185 aa).

It belongs to the universal ribosomal protein uL22 family.

This is Large ribosomal subunit protein uL22 (RPL17) from Debaryomyces hansenii (strain ATCC 36239 / CBS 767 / BCRC 21394 / JCM 1990 / NBRC 0083 / IGC 2968) (Yeast).